Reading from the N-terminus, the 382-residue chain is Gap junction alpha-1 protein (382 aa).

The Cytoplasmic portion of the chain corresponds to 2–23 (GDWSALGKLLDKVQAYSTAGGK). Serine 5 bears the Phosphoserine mark. Residues 24–44 (VWLSVLFIFRILLLGTAVESA) form a helical membrane-spanning segment. Residues 45 to 76 (WGDEQSAFRCNTQQPGCENVCYDKSFPISHVR) are Extracellular-facing. Disulfide bonds link cysteine 54-cysteine 192 and cysteine 187-cysteine 198. The helical transmembrane segment at 77–97 (FWVLQIIFVSVPTLLYLAHVF) threads the bilayer. The Cytoplasmic portion of the chain corresponds to 98 to 155 (YVMRKEEKLNKKEEELKVAQTDGVNVEMHLKQIEIKKFKYGIEEHGKVKMRGGLLRTY). Residue lysine 144 forms a Glycyl lysine isopeptide (Lys-Gly) (interchain with G-Cter in SUMO) linkage. Residues 156–176 (IISILFKSVFEVAFLLIQWYI) form a helical membrane-spanning segment. At 177–207 (YGFSLSAVYTCKRDPCPHQVDCFLSRPTEKT) the chain is on the extracellular side. A helical membrane pass occupies residues 208 to 228 (IFIIFMLVVSLVSLALNIIEL). The Cytoplasmic segment spans residues 229-382 (FYVFFKGVKD…SRPRPDDLEI (154 aa)). Lysine 237 participates in a covalent cross-link: Glycyl lysine isopeptide (Lys-Gly) (interchain with G-Cter in SUMO). Residues 244–382 (SDPYHATTGP…SRPRPDDLEI (139 aa)) form an interaction with NOV region. At tyrosine 247 the chain carries Phosphotyrosine. Serine 255, serine 257, and serine 262 each carry phosphoserine. Residues 264 to 382 (KYAYFNGCSS…SRPRPDDLEI (119 aa)) are interaction with UBQLN4. Cysteine 271 carries the post-translational modification S-nitrosocysteine. Phosphothreonine is present on threonine 275. Phosphoserine occurs at positions 306 and 314. Over residues 317-332 (QNRMGQAGSTISNSHA) the composition is skewed to polar residues. The interval 317-382 (QNRMGQAGST…SRPRPDDLEI (66 aa)) is disordered. Serine 325 bears the Phosphoserine; by CK1 mark. Phosphothreonine is present on threonine 326. A phosphoserine; by CK1 mark is found at serine 328 and serine 330. Phosphoserine occurs at positions 344 and 365. Positions 362–374 (RPSSRASSRASSR) are enriched in low complexity. Phosphoserine; by PKC/PRKCG and PKC/PRKCD is present on serine 368. Residues serine 369 and serine 373 each carry the phosphoserine modification.

This sequence belongs to the connexin family. Alpha-type (group II) subfamily. A connexon is composed of a hexamer of connexins. Interacts with SGSM3. Interacts with RIC1/CIP150. Interacts with CNST and CSNK1D. Interacts (via C-terminus) with TJP1. Interacts (via C-terminus) with SRC (via SH3 domain). Interacts (not ubiquitinated) with UBQLN4 (via UBA domain). Interacts with NOV. Interacts with TMEM65. Interacts with ANK3/ANKG and PKP2. In terms of processing, phosphorylation at Ser-325, Ser-328 and Ser-330 by CK1 modulates gap junction assembly. Phosphorylated at Ser-368 by PRKCG; phosphorylation induces disassembly of gap junction plaques and inhibition of gap junction activity. Phosphorylation at Ser-368 by PRKCD triggers its internalization into small vesicles leading to proteasome-mediated degradation. Post-translationally, sumoylated with SUMO1, SUMO2 and SUMO3, which may regulate the level of functional Cx43 gap junctions at the plasma membrane. May be desumoylated by SENP1 or SENP2. S-nitrosylation at Cys-271 is enriched at the muscle endothelial gap junction in arteries, it augments channel permeability and may regulate of smooth muscle cell to endothelial cell communication. In terms of processing, acetylated in the developing cortex; leading to delocalization from the cell membrane.

Its subcellular location is the cell membrane. It is found in the cell junction. It localises to the gap junction. The protein localises to the endoplasmic reticulum. Functionally, gap junction protein that acts as a regulator of bladder capacity. A gap junction consists of a cluster of closely packed pairs of transmembrane channels, the connexons, through which materials of low MW diffuse from one cell to a neighboring cell. May play a critical role in the physiology of hearing by participating in the recycling of potassium to the cochlear endolymph. Negative regulator of bladder functional capacity: acts by enhancing intercellular electrical and chemical transmission, thus sensitizing bladder muscles to cholinergic neural stimuli and causing them to contract. May play a role in cell growth inhibition through the regulation of NOV expression and localization. Plays an essential role in gap junction communication in the ventricles. This chain is Gap junction alpha-1 protein (GJA1), found in Ursus americanus (American black bear).